The chain runs to 313 residues: Protein FixB (313 aa).

Residue 255-283 (LYLAVGISGQIQHMVGANASQTIFAINKD) coordinates FAD.

Belongs to the ETF alpha-subunit/FixB family. In terms of assembly, heterodimer of FixA and FixB.

Its pathway is amine and polyamine metabolism; carnitine metabolism. Functionally, required for anaerobic carnitine reduction. May bring reductant to CaiA. The protein is Protein FixB of Shigella flexneri.